Reading from the N-terminus, the 352-residue chain is S-adenosylmethionine:tRNA ribosyltransferase-isomerase (352 aa).

Belongs to the QueA family. Monomer.

It is found in the cytoplasm. The catalysed reaction is 7-aminomethyl-7-carbaguanosine(34) in tRNA + S-adenosyl-L-methionine = epoxyqueuosine(34) in tRNA + adenine + L-methionine + 2 H(+). Its pathway is tRNA modification; tRNA-queuosine biosynthesis. Functionally, transfers and isomerizes the ribose moiety from AdoMet to the 7-aminomethyl group of 7-deazaguanine (preQ1-tRNA) to give epoxyqueuosine (oQ-tRNA). This Cupriavidus necator (strain ATCC 17699 / DSM 428 / KCTC 22496 / NCIMB 10442 / H16 / Stanier 337) (Ralstonia eutropha) protein is S-adenosylmethionine:tRNA ribosyltransferase-isomerase.